We begin with the raw amino-acid sequence, 240 residues long: Ubiquitin domain-containing protein 2 (240 aa).

The disordered stretch occupies residues 1–48 (MGGCVGSHHDSSGSLNENSDGTGVALGRNQPLKREKPKWKSDYPMTDG). Over residues 12-21 (SGSLNENSDG) the composition is skewed to polar residues. The segment covering 32 to 41 (LKREKPKWKS) has biased composition (basic and acidic residues). The Ubiquitin-like domain occupies 152-227 (CQLRLRLSTG…VQVIVSQPPT (76 aa)).

It localises to the cytoplasm. The sequence is that of Ubiquitin domain-containing protein 2 (ubtd2) from Danio rerio (Zebrafish).